The following is a 342-amino-acid chain: MEENKLSGNKPIQLATWSNQMGSPENNGNNANNGSDVQNVIQKALGLIRQLNNNGLMSPMEEEHSQPSSSQETLSVDREINEQGRLRLLMQAKDDNTRKEVGTYSSPMDSAYARENMLNVLQSLVTHLNQAVSQIQQLKFKNMILTSNENNIQSRHEVEDNLQKQQFERMKCQFLLERQSLKDQLRKRENKIVKYKQKIIEKNKKLNNLAKVLNQHAISDTSQIDSFSSSVKKTPSSTTTPQEMKSDMLNTLGILATHVLKDEIDDDSGNQTILQLAAGSISNDCNTTELEITCSPEMGRTITHNRPNTKDESIQDSHGNRTLQLPKMKSFSTIDGSIKDIK.

Disordered regions lie at residues 1–36 (MEENKLSGNKPIQLATWSNQMGSPENNGNNANNGSD), 57–76 (MSPMEEEHSQPSSSQETLSV), and 299–322 (GRTITHNRPNTKDESIQDSHGNRT). A compositionally biased stretch (polar residues) spans 15–25 (ATWSNQMGSPE). Residues 308 to 319 (NTKDESIQDSHG) show a composition bias toward basic and acidic residues.

In terms of assembly, interacts with FKH1.

In concert with FKH1, plays a role in directionality of mating type switching by controlling which donor mating-type locus is inserted into MAT locus during mating type switching. The chain is Protein FDO1 from Saccharomyces cerevisiae (strain ATCC 204508 / S288c) (Baker's yeast).